Reading from the N-terminus, the 151-residue chain is Large ribosomal subunit protein bL9 (151 aa).

This sequence belongs to the bacterial ribosomal protein bL9 family.

In terms of biological role, binds to the 23S rRNA. The sequence is that of Large ribosomal subunit protein bL9 from Azoarcus sp. (strain BH72).